Here is a 320-residue protein sequence, read N- to C-terminus: Probable arabinan endo-1,5-alpha-L-arabinosidase C (320 aa).

An N-terminal signal peptide occupies residues 1-16 (MYRSTLLFLFIALVNA). The active-site Proton acceptor is the Asp-31. N-linked (GlcNAc...) asparagine glycosylation is found at Asn-73, Asn-137, and Asn-191. The Proton donor role is filled by Glu-199.

This sequence belongs to the glycosyl hydrolase 43 family.

The protein resides in the secreted. The enzyme catalyses Endohydrolysis of (1-&gt;5)-alpha-arabinofuranosidic linkages in (1-&gt;5)-arabinans.. It functions in the pathway glycan metabolism; L-arabinan degradation. Its function is as follows. Endo-1,5-alpha-L-arabinanase involved in degradation of pectin. Its preferred substrate is linear 1,5-alpha-L-arabinan. The polypeptide is Probable arabinan endo-1,5-alpha-L-arabinosidase C (abnC) (Aspergillus terreus (strain NIH 2624 / FGSC A1156)).